The following is a 396-amino-acid chain: L-lactate dehydrogenase (396 aa).

Residues Met1–Ser380 enclose the FMN hydroxy acid dehydrogenase domain. Position 24 (Tyr24) interacts with substrate. FMN contacts are provided by Ser106 and Gln127. Position 129 (Tyr129) interacts with substrate. An FMN-binding site is contributed by Thr155. Arg164 serves as a coordination point for substrate. Residue Lys251 coordinates FMN. His275 functions as the Proton acceptor in the catalytic mechanism. Position 278 (Arg278) interacts with substrate. Asp306–Arg330 contributes to the FMN binding site.

This sequence belongs to the FMN-dependent alpha-hydroxy acid dehydrogenase family. FMN serves as cofactor.

It is found in the cell inner membrane. It catalyses the reaction (S)-lactate + A = pyruvate + AH2. In terms of biological role, catalyzes the conversion of L-lactate to pyruvate. Is coupled to the respiratory chain. This is L-lactate dehydrogenase from Escherichia coli (strain SMS-3-5 / SECEC).